We begin with the raw amino-acid sequence, 229 residues long: Cell division topological specificity factor homolog, chloroplastic (229 aa).

Residues 1 to 30 constitute a chloroplast transit peptide; the sequence is MAMSSGTLRISATLVSPYHHHHRNRLSLPS. The segment at 35-141 is interaction with MIND1; sequence VDFTGFISNG…KMILFSDRCD (107 aa). A homodimerization region spans residues 142-169; sequence VSDEAKRKIVNNIIHALSDFVEIESEEK.

The protein belongs to the MinE family. Homodimer. Interacts with MIND1. These interactions are required for proper intraplastidic localization. Binds to ARC3. Expressed in green tissues, especially at the shoot apex. Also present in leaves, stems, buds, and flowers, especially in sepals, siliques (tip and base), and anthers (mostly in pollen grains).

The protein resides in the plastid. The protein localises to the chloroplast. Acts as a topological specificity factor during plastid division and specify plastid constriction sites (such as the Z-ring) in a MCD1-dependent manner. Especially involved in epidermal plastids division in a FTSZ1-dependent manner. Required for the proper formation of FtsZ rings at the division site in nongreen plastids (e.g. etioplasts). May contribute to gravitropism in stems and hypocotyls. Stimulates MIND1 ATPase activity. In cooperation with MIND1, prevents FtsZ ring formation anywhere outside of the mid-plastids. The sequence is that of Cell division topological specificity factor homolog, chloroplastic from Arabidopsis thaliana (Mouse-ear cress).